Here is a 700-residue protein sequence, read N- to C-terminus: Polyribonucleotide nucleotidyltransferase (700 aa).

Aspartate 485 and aspartate 491 together coordinate Mg(2+). Positions proline 552 to isoleucine 611 constitute a KH domain. Residues glycine 621–lysine 689 form the S1 motif domain.

The protein belongs to the polyribonucleotide nucleotidyltransferase family. Component of the RNA degradosome, which is a multiprotein complex involved in RNA processing and mRNA degradation. The cofactor is Mg(2+).

The protein localises to the cytoplasm. It carries out the reaction RNA(n+1) + phosphate = RNA(n) + a ribonucleoside 5'-diphosphate. Its function is as follows. Involved in mRNA degradation. Catalyzes the phosphorolysis of single-stranded polyribonucleotides processively in the 3'- to 5'-direction. This is Polyribonucleotide nucleotidyltransferase from Shewanella loihica (strain ATCC BAA-1088 / PV-4).